The primary structure comprises 418 residues: Gene 68 protein (418 aa).

2 disordered regions span residues 230–304 and 353–418; these read IPAP…IHTL and DTFE…ERRA. Residues 241–250 show a composition bias toward basic and acidic residues; that stretch reads RPSEGGDARP. The span at 257-266 shows a compositional bias: basic residues; sequence SRARSVHGRR. Positions 353 to 369 are enriched in basic and acidic residues; it reads DTFEDNRRDELRHDDSR. A compositionally biased stretch (basic residues) spans 395–404; that stretch reads PHLRRSRGRG.

This sequence belongs to the herpesviridae US2 family.

The polypeptide is Gene 68 protein (Equine herpesvirus 1 (strain Ab4p) (EHV-1)).